Consider the following 237-residue polypeptide: Lectin alpha chain (237 aa).

Mn(2+) contacts are provided by Glu-8 and Asp-10. Asp-10, Tyr-12, Asn-14, and Asp-19 together coordinate Ca(2+). Tyr-12 contacts a carbohydrate. Mn(2+) is bound by residues Asp-19 and His-24. An a carbohydrate-binding site is contributed by 99-100 (LY). Asp-208 lines the Ca(2+) pocket. Arg-228 provides a ligand contact to a carbohydrate.

This sequence belongs to the leguminous lectin family. Homotetramer. In terms of processing, the beta and gamma chains are produced by partial proteolytic processing of the lectin alpha chain by an asparaginyl endopeptidase.

The protein resides in the vacuole. It is found in the aleurone grain. In terms of biological role, D-mannose/D-glucose-binding lectin with hemagglutinating activity towards rabbit and human erythrocytes. In rats, elicits an acute inflammatory response by inducing neutrophil migration and induces dose-dependent paw edema. The sequence is that of Lectin alpha chain from Macropsychanthus wilsonii (Wilson's clusterpea).